Reading from the N-terminus, the 309-residue chain is Porphobilinogen deaminase (309 aa).

At Cys242 the chain carries S-(dipyrrolylmethanemethyl)cysteine.

Belongs to the HMBS family. In terms of assembly, monomer. It depends on dipyrromethane as a cofactor.

The enzyme catalyses 4 porphobilinogen + H2O = hydroxymethylbilane + 4 NH4(+). Its pathway is porphyrin-containing compound metabolism; protoporphyrin-IX biosynthesis; coproporphyrinogen-III from 5-aminolevulinate: step 2/4. In terms of biological role, tetrapolymerization of the monopyrrole PBG into the hydroxymethylbilane pre-uroporphyrinogen in several discrete steps. The protein is Porphobilinogen deaminase of Actinobacillus succinogenes (strain ATCC 55618 / DSM 22257 / CCUG 43843 / 130Z).